The chain runs to 501 residues: Geissoschizine oxidase (501 aa).

The helical transmembrane segment at 1-21 threads the bilayer; it reads MEFSFSSPALYIVYFLLFFVV. N-linked (GlcNAc...) asparagine glycosylation occurs at Asn60. Cys442 contributes to the heme binding site.

This sequence belongs to the cytochrome P450 family. Heme is required as a cofactor. As to expression, expressed in leaf epidermis. Also present in the leaf internal phloem-associated parenchyma (IPAP) inside the mesophyll.

Its subcellular location is the membrane. It carries out the reaction (19E)-geissoschizine + reduced [NADPH--hemoprotein reductase] + O2 = akuammicine + formate + oxidized [NADPH--hemoprotein reductase] + H2O + H(+). It catalyses the reaction (19E)-geissoschizine + reduced [NADPH--hemoprotein reductase] + O2 = 3,17-didehydrostemmadenine + oxidized [NADPH--hemoprotein reductase] + 2 H2O. Its pathway is alkaloid biosynthesis. Functionally, component of the seco-iridoid and derivatives monoterpenoid indole alkaloids (MIAs, e.g. vincristine, quinine, and strychnine) biosynthesis pathway. Catalyzes the oxidation of 19E-geissoschizine to produce a short-lived MIA unstable intermediate which can be spontaneously converted into akuammicine or oxidized by Redox1 and Redox2 to produce stemmadenine and 16S/R-deshydroxymethylstemmadenine (16S/R-DHS). This chain is Geissoschizine oxidase, found in Catharanthus roseus (Madagascar periwinkle).